The sequence spans 323 residues: tRNA U34 carboxymethyltransferase (323 aa).

Carboxy-S-adenosyl-L-methionine contacts are provided by residues lysine 91, tryptophan 105, lysine 110, glycine 130, 152-154, 181-182, methionine 196, tyrosine 200, and arginine 315; these read DPS and IE.

The protein belongs to the class I-like SAM-binding methyltransferase superfamily. CmoB family. As to quaternary structure, homotetramer.

It carries out the reaction carboxy-S-adenosyl-L-methionine + 5-hydroxyuridine(34) in tRNA = 5-carboxymethoxyuridine(34) in tRNA + S-adenosyl-L-homocysteine + H(+). Its function is as follows. Catalyzes carboxymethyl transfer from carboxy-S-adenosyl-L-methionine (Cx-SAM) to 5-hydroxyuridine (ho5U) to form 5-carboxymethoxyuridine (cmo5U) at position 34 in tRNAs. In Vibrio atlanticus (strain LGP32) (Vibrio splendidus (strain Mel32)), this protein is tRNA U34 carboxymethyltransferase.